The sequence spans 899 residues: MLKPQLQQSSQSTKALIPSWNTNPLFLASFPINILNKNFRLKKKNNFRVHHNYNGASTTKAVLSSTEKATGVKAVVTVQKQVNLNLSRGLDDIGDLLGKSLLLWIVAAELDHKTGIEKPGIRAYAHRGRDVDGDTHYEADFVIPQDFGEVGAILIENEHHKEMYVKNIVIDGFVHGKVEITCNSWVHSKFDNPDKRIFFTNKSYLPSQTPSGVSRLREEELVTLRGDGIGERKVFERIYDYDVYNDLGEADSNNDDAKRPVLGGKELPYPRRCKTGRPRSKKDPLSETRSTFVYVPRDEAFSEVKSVAFSGNTVYSVLHAVVPALESVVTDPNLGFPHFPAIDSLFNVGVDLPGLGDKKSGLFNVVPRLIKAISDTRKDVLLFESPQLVQRDKFSWFRDVEFARQTLAGLNPYSIRLVTEWPLRSKLDPKVYGPPESEITKELIEKEIGNYMTVEQAVQQKKLFILDYHDLLLPYVNKVNELKGSMLYGSRTIFFLTPQGTLKPLAIELTRPPVDDKPQWKEVYSPNDWNATGAWLWKLAKAHVLSHDSGYHQLVSHWLRTHCCTEPYIIASNRQLSAMHPIYRLLHPHFRYTMEINALAREALINANGVIESSFFPGKYAIELSSIAYGAEWRFDQEALPQNLISRGLAVEDPNEPHGLKLAIEDYPFANDGLVLWDILKQWVTNYVNHYYPQTNLIESDKELQAWWSEIKNVGHGDKRDEPWWPELKTPNDLIGIITTIVWVTSGHHAAVNFGQYSYAGYFPNRPTVARSKMPTEDPTAEEWEWFMNKPEEALLRCFPSQIQATKVMAILDVLSNHSPDEEYIGEKIEPYWAEDPVINAAFEVFSGKLKELEGIIDARNNDSKLSNRNGAGVMPYELLKPYSEPGVTGKGVPYSISI.

The transit peptide at 1-40 directs the protein to the chloroplast; sequence MLKPQLQQSSQSTKALIPSWNTNPLFLASFPINILNKNFR. A PLAT domain is found at 78–200; sequence VQKQVNLNLS…DNPDKRIFFT (123 aa). The Lipoxygenase domain occupies 203 to 899; that stretch reads SYLPSQTPSG…GKGVPYSISI (697 aa). The tract at residues 252-287 is disordered; sequence SNNDDAKRPVLGGKELPYPRRCKTGRPRSKKDPLSE. A compositionally biased stretch (basic residues) spans 271–280; it reads RRCKTGRPRS. The Fe cation site is built by histidine 557, histidine 562, histidine 749, asparagine 753, and isoleucine 899.

The protein belongs to the lipoxygenase family. Monomer. Fe cation serves as cofactor. Expressed in leaves and floral buds.

The protein localises to the plastid. It localises to the chloroplast stroma. The protein resides in the chloroplast thylakoid. It catalyses the reaction (9Z,12Z)-octadecadienoate + O2 = (13S)-hydroperoxy-(9Z,11E)-octadecadienoate. It carries out the reaction (9Z,12Z,15Z)-octadecatrienoate + O2 = (13S)-hydroperoxy-(9Z,11E,15Z)-octadecatrienoate. The protein operates within lipid metabolism; oxylipin biosynthesis. Its function is as follows. Plant lipoxygenase involved in a number of diverse aspects of plant physiology including growth and development, pest resistance, and senescence. May not be involved in the bulk production of jasmonate upon wounding. Catalyzes the hydroperoxidation of lipids containing a cis,cis-1,4-pentadiene structure. Linolenic acid is the preferred substrate, before linoleic and arachidonic acids. Also has some activity with phosphatidylglycerol, but not with galactolipids. This is Linoleate 13S-lipoxygenase 2-1, chloroplastic from Solanum tuberosum (Potato).